The sequence spans 143 residues: Transcriptional regulator MraZ (143 aa).

2 SpoVT-AbrB domains span residues 5–47 (TFTP…PREE) and 76–119 (ADEQ…DAQA).

Belongs to the MraZ family. Forms oligomers.

It is found in the cytoplasm. Its subcellular location is the nucleoid. The protein is Transcriptional regulator MraZ of Corynebacterium urealyticum (strain ATCC 43042 / DSM 7109).